The following is a 432-amino-acid chain: Cytoplasmic 60S subunit biogenesis factor REH1 (432 aa).

The segment at 6 to 30 adopts a C2H2-type 1 zinc-finger fold; it reads FTCNCCVIQFKTSDLQRYHMKTEWH. Residues 79–150 are disordered; sequence QSNALPQKQK…NTDYGEDTVS (72 aa). Basic residues predominate over residues 86-98; that stretch reads KQKKPIKSKRGRK. Residues 105 to 117 show a composition bias toward basic and acidic residues; the sequence is KRKDRDIAKEKQN. A compositionally biased stretch (polar residues) spans 118 to 143; it reads RSVSPSGSISSQLSNLTVGTENTNTD. 2 consecutive C2H2-type zinc fingers follow at residues 186–209 and 237–261; these read TECIYCGKDNKEVERNVKHMFSEH and HNCLCCNFHGSGLESIRAHMASKRH.

The protein belongs to the REI1 family. In terms of assembly, associates with nascent pre-60S particles that have not yet entered the translating pool, and is released from mature 60S subunits. Interacts with pre-60S factors NMD3, LSG1, and TIF6.

Its subcellular location is the cytoplasm. Its function is as follows. Pre-60S-associated cytoplasmic factor involved in the cytoplasmic maturation of the 60S subunit. May act redundantly with REI1 to directly promote a stabilizing structural rearrangement in cytoplasmic 60S subunit maturation independent on the REI1-specific ARX1 recycling. The sequence is that of Cytoplasmic 60S subunit biogenesis factor REH1 (REH1) from Saccharomyces cerevisiae (strain ATCC 204508 / S288c) (Baker's yeast).